Consider the following 236-residue polypeptide: MGRAFEYRKASKLKRWGAMSKLFPKLGKIITMAAKEGGSDPDMNARLRTAIINAKAENMPKDNIEAAIKRATSKDTASMLEVSFEAKAPHGAQFFIECMTDNNTRTVANVKNILTKHGAEMLTKGSLEFMFDRKAIFEFALKDNMDLEELELELIDAGLEEIEEEDGVVIISTDYKNFGSLNSALEDMKIEIIKANLERMATSPISLTEQQQADIERIIDKLEDDEDVQKVFTNIA.

This sequence belongs to the TACO1 family.

Its subcellular location is the cytoplasm. In Sulfurimonas denitrificans (strain ATCC 33889 / DSM 1251) (Thiomicrospira denitrificans (strain ATCC 33889 / DSM 1251)), this protein is Probable transcriptional regulatory protein Suden_1389.